A 285-amino-acid polypeptide reads, in one-letter code: Transmembrane protein DDB_G0269096 (285 aa).

Disordered regions lie at residues 1-25 (MEDR…MSQS) and 59-87 (SFEN…NNKN). Composition is skewed to low complexity over residues 12–25 (SDIS…MSQS) and 65–85 (NNNN…NNNN). 5 helical membrane passes run 124–144 (LEEI…LALI), 152–172 (AQMQ…FGVP), 182–202 (LIMG…ALVY), 205–225 (ANFE…MQFT), and 250–270 (FYFI…TALV).

Its subcellular location is the membrane. The protein is Transmembrane protein DDB_G0269096 of Dictyostelium discoideum (Social amoeba).